A 70-amino-acid polypeptide reads, in one-letter code: uncharacterized protein (70 aa).

This is an uncharacterized protein from Thermoproteus tenax virus 1 (strain KRA1) (TTV1).